A 362-amino-acid chain; its full sequence is Mortality factor 4-like protein 1 (362 aa).

The Tudor-knot domain occupies 12–51 (QEGERVLCFHGPLLYEAKCVKVAIKDKQVKYFIHYSGWNK). An interaction with KAT8 region spans residues 26–62 (YEAKCVKVAIKDKQVKYFIHYSGWNKKSAVRPRRSEK). Positions 113 to 182 (RELQKANQEQ…RKKRARVDPT (70 aa)) are disordered. The sufficient for interaction with SIN3A stretch occupies residues 133 to 266 (PGKKTSGLQQ…VAGIKEYFNV (134 aa)). A Nuclear localization signal motif is present at residues 135 to 146 (KKTSGLQQKNVE). K143 bears the N6-acetyllysine mark. Residues 164-230 (STSETPQPPR…FYLPAKKNVD (67 aa)) form an interaction with RB1-1 region. The segment at 188-342 (TFMNRVEVKV…FLKYLAKNSA (155 aa)) is sufficient for interaction with PHF12. In terms of domain architecture, MRG spans 191-362 (NRVEVKVKIP…APPEYHRKAV (172 aa)). Residues 323 to 344 (LALLLNYLHDFLKYLAKNSATL) are interaction with RB1-2.

As to quaternary structure, component of the NuA4 histone acetyltransferase complex which contains the catalytic subunit KAT5/TIP60 and the subunits EP400, TRRAP/PAF400, BRD8/SMAP, EPC1, DMAP1/DNMAP1, RUVBL1/TIP49, RUVBL2, ING3, actin, ACTL6A/BAF53A, MORF4L1/MRG15, MORF4L2/MRGX, MRGBP, YEATS4/GAS41, VPS72/YL1 and MEAF6. The NuA4 complex interacts with MYC and the adenovirus E1A protein. MORF4L1 may also participate in the formation of NuA4 related complexes which lack the KAT5/TIP60 catalytic subunit, but which include the SWI/SNF related protein SRCAP. Component of the mSin3A histone deacetylase complex, which includes SIN3A, HDAC2, ARID4B, MORF4L1, RBBP4/RbAp48, and RBBP7/RbAp46. May also interact with PHF12 and one or more as yet undefined members of the TLE (transducin-like enhancer of split) family of transcriptional repressors. Component of the SIN3B complex, which includes SIN3B, HDAC2 or HDAC1, PHF12 and MORF4L1. Interacts with RB1 and KAT8. Interacts with the N-terminus of MRFAP1. Found in a complex composed of MORF4L1, MRFAP1 and RB1. Interacts with the entire BRCA complex, which contains BRCA1, PALB2, BRCA2 and RAD51. Interacts with PALB2. Forms a complex with MSL1 and NUPR1.

It localises to the nucleus. Component of the NuA4 histone acetyltransferase (HAT) complex which is involved in transcriptional activation of select genes principally by acetylation of nucleosomal histones H4 and H2A. This modification may both alter nucleosome - DNA interactions and promote interaction of the modified histones with other proteins which positively regulate transcription. This complex may be required for the activation of transcriptional programs associated with oncogene and proto-oncogene mediated growth induction, tumor suppressor mediated growth arrest and replicative senescence, apoptosis, and DNA repair. The NuA4 complex ATPase and helicase activities seem to be, at least in part, contributed by the association of RUVBL1 and RUVBL2 with EP400. NuA4 may also play a direct role in DNA repair when directly recruited to sites of DNA damage. As part of the SIN3B complex represses transcription and counteracts the histone acetyltransferase activity of EP300 through the recognition H3K27ac marks by PHF12 and the activity of the histone deacetylase HDAC2. SIN3B complex is recruited downstream of the constitutively active genes transcriptional start sites through interaction with histones and mitigates histone acetylation and RNA polymerase II progression within transcribed regions contributing to the regulation of transcription. Required for homologous recombination repair (HRR) and resistance to mitomycin C (MMC). Involved in the localization of PALB2, BRCA2 and RAD51, but not BRCA1, to DNA-damage foci. In Homo sapiens (Human), this protein is Mortality factor 4-like protein 1.